We begin with the raw amino-acid sequence, 159 residues long: Thioredoxin O2, mitochondrial (159 aa).

Ser40 is subject to Phosphoserine. A Thioredoxin domain is found at 43–159; that stretch reads FAEGDRSSFV…LKSVMEQLYK (117 aa). Catalysis depends on nucleophile residues Cys83 and Cys86. Cys83 and Cys86 are oxidised to a cystine.

This sequence belongs to the thioredoxin family. Plant O-type subfamily.

The protein localises to the mitochondrion. Thiol-disulfide oxidoreductase that may participate in various redox reactions. Possesses insulin disulfide bonds reducing activity. Reduced by thioredoxin reductases NTRA and NTRB. In Arabidopsis thaliana (Mouse-ear cress), this protein is Thioredoxin O2, mitochondrial.